The primary structure comprises 103 residues: Thioredoxin (103 aa).

Residues 1–103 enclose the Thioredoxin domain; it reads MVKEITDATF…ELDEVINKYV (103 aa). Cysteine 28 and cysteine 31 are disulfide-bonded.

The protein belongs to the thioredoxin family.

Its function is as follows. Component of the thioredoxin-thioredoxin reductase system. Participates in various redox reactions through the reversible oxidation of its active center dithiol to a disulfide and catalyzes dithiol-disulfide exchange reactions. The polypeptide is Thioredoxin (trxA) (Listeria innocua serovar 6a (strain ATCC BAA-680 / CLIP 11262)).